Here is a 616-residue protein sequence, read N- to C-terminus: Chaperone protein HscA (616 aa).

This sequence belongs to the heat shock protein 70 family.

Its function is as follows. Chaperone involved in the maturation of iron-sulfur cluster-containing proteins. Has a low intrinsic ATPase activity which is markedly stimulated by HscB. Involved in the maturation of IscU. This Klebsiella pneumoniae subsp. pneumoniae (strain ATCC 700721 / MGH 78578) protein is Chaperone protein HscA.